The sequence spans 255 residues: Ribonuclease PH (255 aa).

Residues arginine 86 and glycine 124–arginine 126 each bind phosphate.

The protein belongs to the RNase PH family. In terms of assembly, homohexameric ring arranged as a trimer of dimers.

The catalysed reaction is tRNA(n+1) + phosphate = tRNA(n) + a ribonucleoside 5'-diphosphate. Its function is as follows. Phosphorolytic 3'-5' exoribonuclease that plays an important role in tRNA 3'-end maturation. Removes nucleotide residues following the 3'-CCA terminus of tRNAs; can also add nucleotides to the ends of RNA molecules by using nucleoside diphosphates as substrates, but this may not be physiologically important. Probably plays a role in initiation of 16S rRNA degradation (leading to ribosome degradation) during starvation. The chain is Ribonuclease PH from Geobacillus thermodenitrificans (strain NG80-2).